We begin with the raw amino-acid sequence, 426 residues long: Probable imidazolonepropionase (426 aa).

Positions 159 and 192 each coordinate 4-imidazolone-5-propanoate. Position 159 (Tyr159) interacts with N-formimidoyl-L-glutamate. Residue His260 participates in Fe(3+) binding. His260 contacts Zn(2+). Glu263 serves as a coordination point for 4-imidazolone-5-propanoate. Asp334 contacts Fe(3+). Asp334 contacts Zn(2+). Asn336 contacts N-formimidoyl-L-glutamate.

This sequence belongs to the metallo-dependent hydrolases superfamily. HutI family. Zn(2+) is required as a cofactor. Requires Fe(3+) as cofactor.

It catalyses the reaction 4-imidazolone-5-propanoate + H2O = N-formimidoyl-L-glutamate. It participates in amino-acid degradation; L-histidine degradation into L-glutamate; N-formimidoyl-L-glutamate from L-histidine: step 3/3. In Homo sapiens (Human), this protein is Probable imidazolonepropionase (AMDHD1).